The primary structure comprises 150 residues: Group IIC secretory phospholipase A2 (150 aa).

Residues 1–20 (MKGIAIFLVFIFYWTTSTLS) form the signal peptide. Cystine bridges form between Cys-46–Cys-143, Cys-48–Cys-64, Cys-63–Cys-121, Cys-69–Cys-150, Cys-70–Cys-114, Cys-79–Cys-107, Cys-97–Cys-112, and Cys-99–Cys-105. Tyr-47, Gly-49, and Gly-51 together coordinate Ca(2+). The active site involves His-67. Asp-68 lines the Ca(2+) pocket. Asn-92 carries an N-linked (GlcNAc...) asparagine glycan. Asp-115 is a catalytic residue.

This sequence belongs to the phospholipase A2 family. It depends on Ca(2+) as a cofactor. As to expression, testis specific.

It is found in the secreted. The enzyme catalyses a 1,2-diacyl-sn-glycero-3-phosphocholine + H2O = a 1-acyl-sn-glycero-3-phosphocholine + a fatty acid + H(+). In terms of biological role, PA2 catalyzes the calcium-dependent hydrolysis of the 2-acyl groups in 3-sn-phosphoglycerides. Testis PA2 may be important in the production of prostaglandins, by the release of arachidonic acid, which in turn are necessary for the contractions of the seminiferous tubules and the testicular capsule; they also seem to decrease sperm transit time through the male reproductive tract. The sequence is that of Group IIC secretory phospholipase A2 (Pla2g2c) from Mus musculus (Mouse).